A 349-amino-acid chain; its full sequence is MIEFDNLTYLHGKPQGTGLLKANPEDFVVVEDLGFEPDGEGEHILVRILKNGCNTRFVADALAKFLKIHAREVSFAGQKDKHAVTEQWLCARVPGKEMPDLSAFQLEGCQVLEYVRHKRKLRLGALKGNAFTLVLREVSNRDDVEQRLIDICVKGVPNYFGAQRFGIGGSNLQGALRWAQTNTPVRDRNKRSFWLSAARSALFNQIVAERLKKADVNQVVDGDALQLAGRGSWFVATTEELAELQRRVNDKELMITAALPGSGEWGTQREALAFEQAAVAAETELQALLVREKVEAARRAMLLYPQQLSWNWWDDVTVEIRFWLPAGSFATSVVRELINTTGDYAHIAE.

Phenylalanine 27 is a binding site for substrate. The active-site Nucleophile is aspartate 80. A substrate-binding site is contributed by asparagine 129. One can recognise a TRUD domain in the interval 155-303 (GVPNYFGAQR…VEAARRAMLL (149 aa)). Phenylalanine 329 is a substrate binding site.

It belongs to the pseudouridine synthase TruD family.

It catalyses the reaction uridine(13) in tRNA = pseudouridine(13) in tRNA. Responsible for synthesis of pseudouridine from uracil-13 in transfer RNAs. This Escherichia coli O17:K52:H18 (strain UMN026 / ExPEC) protein is tRNA pseudouridine synthase D.